Here is a 129-residue protein sequence, read N- to C-terminus: Phosphoribosyl-AMP cyclohydrolase (129 aa).

Asp78 serves as a coordination point for Mg(2+). Cys79 provides a ligand contact to Zn(2+). 2 residues coordinate Mg(2+): Asp80 and Asp82. Residues Cys96 and Cys103 each contribute to the Zn(2+) site.

Belongs to the PRA-CH family. In terms of assembly, homodimer. It depends on Mg(2+) as a cofactor. Zn(2+) is required as a cofactor.

Its subcellular location is the cytoplasm. The enzyme catalyses 1-(5-phospho-beta-D-ribosyl)-5'-AMP + H2O = 1-(5-phospho-beta-D-ribosyl)-5-[(5-phospho-beta-D-ribosylamino)methylideneamino]imidazole-4-carboxamide. It functions in the pathway amino-acid biosynthesis; L-histidine biosynthesis; L-histidine from 5-phospho-alpha-D-ribose 1-diphosphate: step 3/9. In terms of biological role, catalyzes the hydrolysis of the adenine ring of phosphoribosyl-AMP. The protein is Phosphoribosyl-AMP cyclohydrolase of Nitrosomonas eutropha (strain DSM 101675 / C91 / Nm57).